We begin with the raw amino-acid sequence, 638 residues long: MAVDSRMDLLSERAVLMRASLQKSQTITDNVVSILGSFDSRLSALETAMRPTQIRTHAIRKAHENIDRTLKAAEVILSQFDLLRQAETKVLKGPHEDLESYLDAIAQLRKIIRYFMSNKSFKSSDGVLNHANSLLAKAQSKLEEEFKQLLASYSKAVEPDRLFDGLPNSLRPSSDGDGGGKPHGGHHNDDAETAAYTLPILIPSRVLPLLHDLAQQMVQAGHQQQLLQIYRDTRSFVLEESLKKLGVEKLSKEDVQRMQWEVLEAKIGNWIHFMRIAVKLLFAGERQVCDQIFRGFDSLSDQCFAEVTVSSVSMLLSFGDAIARSKRSPEKLFVLLDMYEIMRELHTEIETIFKGKACLEIRDSATGLTKRLAQTAQETFGDFEEAVEKDATKTAVLDGTVHPLTSYVINYVKFLFDYQTTLKQLFLEFGNGDDSNSQLASVTMRIMQALQNNLDGKSKQYKDPALTHLFLMNNIHYMVRSVRRSEAKDLLGDDWVQRHRRIVQQHANQYKRVAWTKILQSSSAQGLTSSGGGSLEGGNSSGVSRGLLKERFKMFNMQFDELHQRQSQWTVPDTELRESLRLAVAEVLLPAYRSFLKRFGPLVESGKNPQKYIKYTAEDLERLLGELFEGKSMNEPRR.

The segment at 163–190 is disordered; the sequence is FDGLPNSLRPSSDGDGGGKPHGGHHNDD.

The protein belongs to the EXO70 family. As to quaternary structure, the exocyst complex is composed of SEC3, SEC5, SEC6, SEC8, SEC10, EXO70A1 and EXO84B. Interacts with SEC3A and EXO84B. Co-localizes with FPP3/VETH1, FPP2/VETH2 and COG2 in vesicle-like small motile compartments. May interact with COG2.

The protein resides in the cytoplasm. It is found in the cytosol. It localises to the cytoskeleton. The protein localises to the phragmoplast. Its subcellular location is the cell membrane. The protein resides in the secreted. It is found in the cell wall. Component of the exocyst complex involved in the docking of exocytic vesicles with fusion sites on the plasma membrane during regulated or polarized secretion. Involved in polarized cell growth and organ morphogenesis. Involved in polarized cell growth and organ morphogenesis. During cytokinesis, involved in cell plate initiation, cell plate maturation and formation of new primary cell wall. Participates in polarized pectin delivery required for the polarized development of the mucilage-producing volcano cells of the seed coat. Involved in the recycling and localization of auxin efflux carriers PIN1 and PIN2, and thus in polar auxin transport regulation. Functions in vesicle trafficking in tracheary elements to regulate patterned secondary cell wall (SCW) thickening. The chain is Exocyst complex component EXO70A1 from Arabidopsis thaliana (Mouse-ear cress).